The primary structure comprises 100 residues: Probable antitoxin MazE4 (100 aa).

The segment at 77 to 100 (PYESEAERSAARARRNARQQRSAQ) is disordered.

Forms a complex with cognate toxin MazF4.

Antitoxin component of a type II toxin-antitoxin (TA) system. Labile antitoxin that binds to cognate MazF4 toxin and counteracts its endoribonuclease activity. This is Probable antitoxin MazE4 (mazE4) from Mycobacterium tuberculosis (strain CDC 1551 / Oshkosh).